The primary structure comprises 310 residues: tRNA pseudouridine synthase B (310 aa).

The Nucleophile role is filled by Asp47.

Belongs to the pseudouridine synthase TruB family. Type 1 subfamily.

The enzyme catalyses uridine(55) in tRNA = pseudouridine(55) in tRNA. Responsible for synthesis of pseudouridine from uracil-55 in the psi GC loop of transfer RNAs. This chain is tRNA pseudouridine synthase B, found in Caulobacter sp. (strain K31).